Consider the following 421-residue polypeptide: Gamma-glutamyl phosphate reductase (421 aa).

This sequence belongs to the gamma-glutamyl phosphate reductase family.

The protein localises to the cytoplasm. The catalysed reaction is L-glutamate 5-semialdehyde + phosphate + NADP(+) = L-glutamyl 5-phosphate + NADPH + H(+). The protein operates within amino-acid biosynthesis; L-proline biosynthesis; L-glutamate 5-semialdehyde from L-glutamate: step 2/2. Catalyzes the NADPH-dependent reduction of L-glutamate 5-phosphate into L-glutamate 5-semialdehyde and phosphate. The product spontaneously undergoes cyclization to form 1-pyrroline-5-carboxylate. The polypeptide is Gamma-glutamyl phosphate reductase (Brucella abortus (strain 2308)).